A 318-amino-acid polypeptide reads, in one-letter code: NLP effector protein 9 (318 aa).

The first 19 residues, 1–19, serve as a signal peptide directing secretion; it reads MRLFAFLWSSVAFLSTVQA. Positions 24 to 35 are enriched in low complexity; the sequence is TASQTQDDSSTP. Disordered regions lie at residues 24–43 and 50–93; these read TASQ…PDKY and LRTK…PAPT. Polar residues predominate over residues 55–65; it reads PMATPNRTIMP. Residue Asn60 is glycosylated (N-linked (GlcNAc...) asparagine). A compositionally biased stretch (pro residues) spans 73-93; sequence PEPPTPEPTYLPTLSPTPAPT. The short motif at 185–195 is the Conserved undecapeptide motif I element; it reads AIMYSWYFPKD. The Hepta-peptide GHRHDWE motif II signature appears at 202–208; it reads GHRHDWE.

This sequence belongs to the Necrosis inducing protein (NPP1) family.

The protein localises to the secreted. Functionally, secreted effector that contributes to virulence during infection by P.capsici. Induces distinct chlorosis at 3 days after inoculation of host C.annuum leaves, and all the chlorotic areas gradually turn brown and become moderately necrotic at 7 days after inoculation. Caused only small necrotic areas at 7 days after non-host N.benthamiana leaves infection. The chain is NLP effector protein 9 from Phytophthora capsici.